We begin with the raw amino-acid sequence, 417 residues long: Gamma-glutamyl phosphate reductase (417 aa).

The protein belongs to the gamma-glutamyl phosphate reductase family.

The protein resides in the cytoplasm. It catalyses the reaction L-glutamate 5-semialdehyde + phosphate + NADP(+) = L-glutamyl 5-phosphate + NADPH + H(+). It participates in amino-acid biosynthesis; L-proline biosynthesis; L-glutamate 5-semialdehyde from L-glutamate: step 2/2. In terms of biological role, catalyzes the NADPH-dependent reduction of L-glutamate 5-phosphate into L-glutamate 5-semialdehyde and phosphate. The product spontaneously undergoes cyclization to form 1-pyrroline-5-carboxylate. The polypeptide is Gamma-glutamyl phosphate reductase (Legionella pneumophila subsp. pneumophila (strain Philadelphia 1 / ATCC 33152 / DSM 7513)).